The chain runs to 101 residues: Chaperone modulatory protein CbpM (101 aa).

It belongs to the CbpM family.

Functionally, interacts with CbpA and inhibits both the DnaJ-like co-chaperone activity and the DNA binding activity of CbpA. Together with CbpA, modulates the activity of the DnaK chaperone system. Does not inhibit the co-chaperone activity of DnaJ. The sequence is that of Chaperone modulatory protein CbpM from Pseudomonas putida (strain GB-1).